A 336-amino-acid chain; its full sequence is F420-dependent glucose-6-phosphate dehydrogenase (336 aa).

Residue Asp37 coordinates coenzyme F420-(gamma-Glu)n. His38 serves as the catalytic Proton donor. Residues Thr74 and 105-106 (SG) each bind coenzyme F420-(gamma-Glu)n. The Proton acceptor role is filled by Glu107. Residues Asn110, 173–174 (SG), and 176–177 (SA) contribute to the coenzyme F420-(gamma-Glu)n site. Residues Thr191, Lys194, Lys255, and Arg279 each coordinate substrate.

It belongs to the F420-dependent glucose-6-phosphate dehydrogenase family. In terms of assembly, homodimer.

The enzyme catalyses oxidized coenzyme F420-(gamma-L-Glu)(n) + D-glucose 6-phosphate + H(+) = 6-phospho-D-glucono-1,5-lactone + reduced coenzyme F420-(gamma-L-Glu)(n). In terms of biological role, catalyzes the coenzyme F420-dependent oxidation of glucose 6-phosphate (G6P) to 6-phosphogluconolactone. The protein is F420-dependent glucose-6-phosphate dehydrogenase of Beutenbergia cavernae (strain ATCC BAA-8 / DSM 12333 / CCUG 43141 / JCM 11478 / NBRC 16432 / NCIMB 13614 / HKI 0122).